The following is a 178-amino-acid chain: Disulfide bond formation protein B (178 aa).

Residues 1 to 14 (MLSFFKTLSTKRSA) are Cytoplasmic-facing. Residues 15–31 (WFLLFSSALLLEAIALY) form a helical membrane-spanning segment. Residues 32 to 49 (FQHGMGLAPCVMCIYERV) lie on the Periplasmic side of the membrane. Cysteine 41 and cysteine 44 are disulfide-bonded. A helical membrane pass occupies residues 50–65 (AILGIAFSGLLGLLYP). At 66 to 72 (SSMLLRL) the chain is on the cytoplasmic side. A helical membrane pass occupies residues 73–90 (VALLIGLSSAIKGLMISI). The Periplasmic segment spans residues 91–145 (THLDLQLYPAPWKQCSAVAEFPETLPLDQWFPALFLPSGSCSEVTWQFLGFSMVQ). Cysteine 105 and cysteine 131 form a disulfide bridge. Residues 146–164 (WIVVIFALYTLLLALIFIS) traverse the membrane as a helical segment. Over 165-177 (QVKRLKPKQRRLF) the chain is Cytoplasmic.

It belongs to the DsbB family.

The protein resides in the cell inner membrane. Required for disulfide bond formation in some periplasmic proteins. Acts by oxidizing the DsbA protein. This is Disulfide bond formation protein B from Pasteurella multocida (strain Pm70).